The chain runs to 592 residues: Aspartate--tRNA ligase (592 aa).

E173 is an L-aspartate binding site. Positions 197 to 200 (QLFK) are aspartate. Residue R219 coordinates L-aspartate. Residues 219 to 221 (RDE) and Q228 each bind ATP. H448 provides a ligand contact to L-aspartate. ATP is bound at residue E482. Residue R489 participates in L-aspartate binding. Position 534–537 (534–537 (GLDR)) interacts with ATP.

Belongs to the class-II aminoacyl-tRNA synthetase family. Type 1 subfamily. As to quaternary structure, homodimer.

It is found in the cytoplasm. The catalysed reaction is tRNA(Asp) + L-aspartate + ATP = L-aspartyl-tRNA(Asp) + AMP + diphosphate. In terms of biological role, catalyzes the attachment of L-aspartate to tRNA(Asp) in a two-step reaction: L-aspartate is first activated by ATP to form Asp-AMP and then transferred to the acceptor end of tRNA(Asp). This is Aspartate--tRNA ligase from Shewanella baltica (strain OS223).